We begin with the raw amino-acid sequence, 340 residues long: uncharacterized protein (340 aa).

The protein localises to the virion. This is an uncharacterized protein from Acanthamoeba polyphaga (Amoeba).